The primary structure comprises 162 residues: NADH-ubiquinone oxidoreductase subunit 8 (162 aa).

4Fe-4S ferredoxin-type domains follow at residues Arg-54 to Glu-83 and Thr-93 to Asn-122. 8 residues coordinate [4Fe-4S] cluster: Cys-63, Cys-66, Cys-69, Cys-73, Cys-102, Cys-105, Cys-108, and Cys-112.

The protein belongs to the complex I 23 kDa subunit family. The cofactor is [4Fe-4S] cluster.

Its subcellular location is the mitochondrion. The catalysed reaction is a ubiquinone + NADH + 5 H(+)(in) = a ubiquinol + NAD(+) + 4 H(+)(out). Core subunit of the mitochondrial membrane respiratory chain NADH dehydrogenase (Complex I) that is believed to belong to the minimal assembly required for catalysis. Complex I functions in the transfer of electrons from NADH to the respiratory chain. The immediate electron acceptor for the enzyme is believed to be ubiquinone. May donate electrons to ubiquinone. This is NADH-ubiquinone oxidoreductase subunit 8 (NAD8) from Reclinomonas americana.